We begin with the raw amino-acid sequence, 122 residues long: Large ribosomal subunit protein uL14 (122 aa).

It belongs to the universal ribosomal protein uL14 family. In terms of assembly, part of the 50S ribosomal subunit. Forms a cluster with proteins L3 and L19. In the 70S ribosome, L14 and L19 interact and together make contacts with the 16S rRNA in bridges B5 and B8.

Binds to 23S rRNA. Forms part of two intersubunit bridges in the 70S ribosome. In Ligilactobacillus salivarius (strain UCC118) (Lactobacillus salivarius), this protein is Large ribosomal subunit protein uL14.